Consider the following 294-residue polypeptide: MKKPFNVIAIIGKPRDQQAIQTHRDLYHWLSSLGYQVFIDDRLSAILNDVPEEHFSGLVELGEKADLAIVVGGDGNMLGAARILSRFNTRVIGVNRGNLGFLTDLNPEDFQHSLKAVLDGAYIEEERFLLEAEIHRHGQVKSHNAALNEAVLHPGQVAHMIEFEVYIDESFAFSLRADGLIVSTPTGSTAYSLSGGGPILSPSLNAISLVPMFPHTLSSRPLVVDGNRRIKLLVSPDNRGTQEVSCDGQVSLPVSPGDEIHIYQSPNRLRLIHPKDYSYYHVLRNKLGWSSKLF.

Catalysis depends on D74, which acts as the Proton acceptor. Residues 74–75 (DG), 148–149 (NE), H159, R176, D178, 189–194 (TAYSLS), and Q249 contribute to the NAD(+) site.

It belongs to the NAD kinase family. A divalent metal cation is required as a cofactor.

The protein localises to the cytoplasm. It catalyses the reaction NAD(+) + ATP = ADP + NADP(+) + H(+). In terms of biological role, involved in the regulation of the intracellular balance of NAD and NADP, and is a key enzyme in the biosynthesis of NADP. Catalyzes specifically the phosphorylation on 2'-hydroxyl of the adenosine moiety of NAD to yield NADP. This chain is NAD kinase, found in Vibrio vulnificus (strain YJ016).